The sequence spans 145 residues: 3-dehydroquinate dehydratase (145 aa).

Catalysis depends on Tyr23, which acts as the Proton acceptor. The substrate site is built by Asn74, His80, and Asp87. His100 serves as the catalytic Proton donor. Substrate is bound by residues 101–102 and Arg111; that span reads LS.

It belongs to the type-II 3-dehydroquinase family. As to quaternary structure, homododecamer.

The catalysed reaction is 3-dehydroquinate = 3-dehydroshikimate + H2O. Its pathway is metabolic intermediate biosynthesis; chorismate biosynthesis; chorismate from D-erythrose 4-phosphate and phosphoenolpyruvate: step 3/7. Functionally, catalyzes a trans-dehydration via an enolate intermediate. The polypeptide is 3-dehydroquinate dehydratase (Halalkalibacterium halodurans (strain ATCC BAA-125 / DSM 18197 / FERM 7344 / JCM 9153 / C-125) (Bacillus halodurans)).